The following is a 220-amino-acid chain: U1 small nuclear ribonucleoprotein C (220 aa).

The Matrin-type zinc-finger motif lies at 4–36; sequence YYCDYCDIYLTHDSMNARKAHNSGRNHVANVRD. Composition is skewed to pro residues over residues 88–130 and 147–165; these read PGPP…PFLP and PPFP…PFRP. The segment at 88-220 is disordered; that stretch reads PGPPPPGAFP…HPDRLRMLGQ (133 aa). Residues 166–200 show a composition bias toward low complexity; that stretch reads PMGMGMPPAPAQAQAQGSPMGMPQQGQQGTFTPTQ. The span at 211-220 shows a compositional bias: basic and acidic residues; it reads HPDRLRMLGQ.

The protein belongs to the U1 small nuclear ribonucleoprotein C family. In terms of assembly, U1 snRNP is composed of the 7 core Sm proteins B/B', D1, D2, D3, E, F and G that assemble in a heptameric protein ring on the Sm site of the small nuclear RNA to form the core snRNP, and at least 3 U1 snRNP-specific proteins U1-70K, U1-A and U1-C. U1-C interacts with U1 snRNA and the 5' splice-site region of the pre-mRNA.

It localises to the nucleus. Its function is as follows. Component of the spliceosomal U1 snRNP, which is essential for recognition of the pre-mRNA 5' splice-site and the subsequent assembly of the spliceosome. U1-C is directly involved in initial 5' splice-site recognition for both constitutive and regulated alternative splicing. The interaction with the 5' splice-site seems to precede base-pairing between the pre-mRNA and the U1 snRNA. Stimulates commitment or early (E) complex formation by stabilizing the base pairing of the 5' end of the U1 snRNA and the 5' splice-site region. The sequence is that of U1 small nuclear ribonucleoprotein C from Cryptococcus neoformans var. neoformans serotype D (strain JEC21 / ATCC MYA-565) (Filobasidiella neoformans).